Consider the following 248-residue polypeptide: 5'-nucleotidase SurE (248 aa).

4 residues coordinate a divalent metal cation: aspartate 8, aspartate 9, serine 39, and asparagine 91.

It belongs to the SurE nucleotidase family. The cofactor is a divalent metal cation.

The protein resides in the cytoplasm. It carries out the reaction a ribonucleoside 5'-phosphate + H2O = a ribonucleoside + phosphate. Nucleotidase that shows phosphatase activity on nucleoside 5'-monophosphates. The polypeptide is 5'-nucleotidase SurE (Neisseria meningitidis serogroup C (strain 053442)).